Here is a 706-residue protein sequence, read N- to C-terminus: Histone deacetylase HDA1 (706 aa).

The segment covering 1 to 24 has biased composition (basic and acidic residues); that stretch reads MDSVMVKKEVLENPDHDLKRKLEE. The tract at residues 1–36 is disordered; sequence MDSVMVKKEVLENPDHDLKRKLEENKEEENSLSTTS. The segment at 67-396 is histone deacetylase; it reads RYHAKIFTSY…ALSVAKVLIG (330 aa). Residue H206 is part of the active site.

This sequence belongs to the histone deacetylase family. HD type 2 subfamily.

The protein localises to the nucleus. It carries out the reaction N(6)-acetyl-L-lysyl-[histone] + H2O = L-lysyl-[histone] + acetate. Its function is as follows. Responsible for the deacetylation of lysine residues on the N-terminal part of the core histones (H2A, H2B, H3 and H4). Histone deacetylation gives a tag for epigenetic repression and plays an important role in transcriptional regulation, cell cycle progression and developmental events. Histone deacetylases act via the formation of large multiprotein complexes. This is Histone deacetylase HDA1 (HDA1) from Saccharomyces cerevisiae (strain ATCC 204508 / S288c) (Baker's yeast).